Reading from the N-terminus, the 287-residue chain is Carbon monoxide dehydrogenase medium chain (287 aa).

The 177-residue stretch at Met1–Gln177 folds into the FAD-binding PCMH-type domain. FAD-binding positions include Ala32–Ser36 and Thr111–Asp115.

As to quaternary structure, dimer of heterotrimers. Each heterotrimer consists of a large, a medium and a small subunit. The cofactor is FAD.

It catalyses the reaction CO + a quinone + H2O = a quinol + CO2. Its function is as follows. Catalyzes the oxidation of carbon monoxide to carbon dioxide. The sequence is that of Carbon monoxide dehydrogenase medium chain (cutM) from Hydrogenophaga pseudoflava (Pseudomonas carboxydoflava).